Consider the following 709-residue polypeptide: Polyribonucleotide nucleotidyltransferase (709 aa).

2 residues coordinate Mg(2+): Asp-489 and Asp-495. The 60-residue stretch at 556–615 (PKIDMIKIDVDKIKVVIGKGGETIDKIIAETGVKIDIDEEGNVSIFSSDQAAIDRTKDII) folds into the KH domain. Residues 625 to 693 (GEVYHAKVVR…DKGRVDASMK (69 aa)) enclose the S1 motif domain.

Belongs to the polyribonucleotide nucleotidyltransferase family. Mg(2+) is required as a cofactor.

The protein resides in the cytoplasm. It catalyses the reaction RNA(n+1) + phosphate = RNA(n) + a ribonucleoside 5'-diphosphate. Its function is as follows. Involved in mRNA degradation. Catalyzes the phosphorolysis of single-stranded polyribonucleotides processively in the 3'- to 5'-direction. This is Polyribonucleotide nucleotidyltransferase from Streptococcus agalactiae serotype V (strain ATCC BAA-611 / 2603 V/R).